The chain runs to 100 residues: C-X-C motif chemokine 11 (100 aa).

An N-terminal signal peptide occupies residues 1 to 21 (MNRKVTAIALAAIIWATAAQG). 2 cysteine pairs are disulfide-bonded: Cys30-Cys57 and Cys32-Cys74.

This sequence belongs to the intercrine alpha (chemokine CxC) family. As to quaternary structure, interacts with TNFAIP6 (via Link domain).

The protein localises to the secreted. Its function is as follows. Chemotactic for interleukin-activated T-cells but not unstimulated T-cells, neutrophils or monocytes. Induces calcium release in activated T-cells. Binds to CXCR3. May play an important role in CNS diseases which involve T-cell recruitment. May play a role in skin immune responses. The protein is C-X-C motif chemokine 11 (Cxcl11) of Mus musculus (Mouse).